Reading from the N-terminus, the 1117-residue chain is DNA polymerase II large subunit (1117 aa).

Over residues 279-294 (STKEEEKKKEESSENK) the composition is skewed to basic and acidic residues. The segment at 279–299 (STKEEEKKKEESSENKPKKKA) is disordered.

The protein belongs to the archaeal DNA polymerase II family. Heterodimer of a large subunit and a small subunit.

It catalyses the reaction DNA(n) + a 2'-deoxyribonucleoside 5'-triphosphate = DNA(n+1) + diphosphate. The enzyme catalyses Exonucleolytic cleavage in the 3'- to 5'-direction to yield nucleoside 5'-phosphates.. Its function is as follows. Possesses two activities: a DNA synthesis (polymerase) and an exonucleolytic activity that degrades single-stranded DNA in the 3'- to 5'-direction. Has a template-primer preference which is characteristic of a replicative DNA polymerase. In Methanosphaera stadtmanae (strain ATCC 43021 / DSM 3091 / JCM 11832 / MCB-3), this protein is DNA polymerase II large subunit.